A 267-amino-acid chain; its full sequence is MKSSEPASVSAAERRAETFQHKLEQFNPGIVWLDQHGRVTAFNDVALQILGPAGEQSLGVAQDSLFGIDVVQLHPEKSRDKLRFLLQSKDVGGCPVKSPPPVAMMINIPDRILMIKVSSMIAAGGACGTCMIFYDVTDLTTEPSGLPAGGSAPSPRRLFKIPVYRKNRVILLDLKDIVRFQGDGHYTTIVTRDDRYLSNLSLADLELRLDSSIYLRVHRSHIVSLQYAVELVKLDESVNLVMDDAEQTQVPVSRSRTAQLKELLGVV.

Positions 15 to 86 constitute a PAS domain; sequence RAETFQHKLE…KSRDKLRFLL (72 aa). Histidine 74 and methionine 104 together coordinate heme. The 106-residue stretch at 161–266 folds into the HTH LytTR-type domain; that stretch reads IPVYRKNRVI…TAQLKELLGV (106 aa).

Requires heme as cofactor.

Its subcellular location is the cytoplasm. Its function is as follows. One-component, b-type heme-containing aerobic sensor and transcriptional regulator that responds to CO by activating the expression of the oxidation operon cox. In Paraburkholderia xenovorans (strain LB400), this protein is Heme-containing CO-sensing transcriptional regulator RcoM 1 (rcoM1).